Here is a 161-residue protein sequence, read N- to C-terminus: MIKYTIDELFQLKPSLTLEVNFDAVEFRAIIEKVKQLQHLKEEEFNSHHVGHFGRRRSSHHHGRPKIKHNKPKVTTDSDGWCTFEAKKKGSGEDDEEETETTPTSTVPVATIAQETLKVKPNNKNISSNRPADTRDIVADKPILGFNAFAALESEDEDDEA.

Positions 52–72 are enriched in basic residues; sequence HFGRRRSSHHHGRPKIKHNKP. A disordered region spans residues 52 to 108; it reads HFGRRRSSHHHGRPKIKHNKPKVTTDSDGWCTFEAKKKGSGEDDEEETETTPTSTVP. Ser78 and Ser91 each carry phosphoserine. Phosphothreonine occurs at positions 99, 101, and 102. Ser154 carries the phosphoserine modification.

The protein belongs to the CAF20 family. As to quaternary structure, interacts with TIF45. In terms of processing, phosphorylated by casein kinase II complex (CK2).

It is found in the cytoplasm. Functionally, acts as an inhibitor of cap-dependent translation. Competes with eIF4G1/TIF4631 and EAP1 for binding to eIF4E/TIF45 and interferes with the formation of the eIF4F complex, inhibiting translation and stabilizing mRNA. Binding affinity for eIF4E/TIF45 is 10-fold less than that of eIF4G1/TIF4631. Required for induction of pseudohyphal growth in response to nitrogen limitation, probably by regulating STE12 translation. The protein is Cap-associated protein CAF20 (CAF20) of Saccharomyces cerevisiae (strain ATCC 204508 / S288c) (Baker's yeast).